The sequence spans 139 residues: Peptide methionine sulfoxide reductase B4 (139 aa).

At Ala2 the chain carries N-acetylalanine. Residues 12 to 133 (EEEWRAVLSP…NSVSINFNPA (122 aa)) enclose the MsrB domain. Zn(2+)-binding residues include Cys51, Cys54, Cys97, and Cys100. Cysteines 69 and 122 form a disulfide. Catalysis depends on Cys122, which acts as the Nucleophile.

Belongs to the MsrB Met sulfoxide reductase family. Zn(2+) is required as a cofactor.

The protein localises to the cytoplasm. It is found in the cytosol. It catalyses the reaction L-methionyl-[protein] + [thioredoxin]-disulfide + H2O = L-methionyl-(R)-S-oxide-[protein] + [thioredoxin]-dithiol. Functionally, catalyzes the reduction of methionine sulfoxide (MetSO) to methionine in proteins. Plays a protective role against oxidative stress by restoring activity to proteins that have been inactivated by methionine oxidation. MSRB family specifically reduces the MetSO R-enantiomer. The polypeptide is Peptide methionine sulfoxide reductase B4 (MSRB4) (Arabidopsis thaliana (Mouse-ear cress)).